The sequence spans 319 residues: Probable NAD(P)H-dependent D-xylose reductase xyl1 (319 aa).

Residue Tyr50 is the Proton donor of the active site. His112 serves as a coordination point for substrate. NAD(+) contacts are provided by residues 166–167 (SN), 215–224 (SSFGPLSFLE), and 271–281 (KSNNPTRLSQN).

The protein belongs to the aldo/keto reductase family.

The enzyme catalyses xylitol + NAD(+) = D-xylose + NADH + H(+). It catalyses the reaction xylitol + NADP(+) = D-xylose + NADPH + H(+). Its pathway is carbohydrate metabolism; D-xylose degradation. In terms of biological role, catalyzes the initial reaction in the xylose utilization pathway by reducing D-xylose into xylitol. Xylose is a major component of hemicelluloses such as xylan. Most fungi utilize D-xylose via three enzymatic reactions, xylose reductase (XR), xylitol dehydrogenase (XDH), and xylulokinase, to form xylulose 5-phosphate, which enters pentose phosphate pathway. This Aspergillus oryzae (strain ATCC 42149 / RIB 40) (Yellow koji mold) protein is Probable NAD(P)H-dependent D-xylose reductase xyl1 (xyl1).